The chain runs to 91 residues: Cell division protein FtsB (91 aa).

The Cytoplasmic portion of the chain corresponds to 1 to 3 (MKW). Residues 4–21 (LVAVLVVFVAMFQYRLWV) form a helical membrane-spanning segment. Residues 22 to 91 (GEGSIADVVR…ETFFMIIDDQ (70 aa)) are Periplasmic-facing. Residues 23-63 (EGSIADVVRLEREIARQEADNERLRERNKQLAAEVDALKTG) are a coiled coil.

It belongs to the FtsB family. Part of a complex composed of FtsB, FtsL and FtsQ.

The protein localises to the cell inner membrane. Its function is as follows. Essential cell division protein. May link together the upstream cell division proteins, which are predominantly cytoplasmic, with the downstream cell division proteins, which are predominantly periplasmic. This chain is Cell division protein FtsB, found in Teredinibacter turnerae (strain ATCC 39867 / T7901).